Here is a 425-residue protein sequence, read N- to C-terminus: C2H2 type master regulator of conidiophore development brlA (425 aa).

Disordered stretches follow at residues 28–72, 232–257, and 281–301; these read MASS…RHTG, KTHS…PMSR, and VQRQ…SLSL. The segment covering 30 to 44 has biased composition (low complexity); sequence SSFSPMESPTPTPTS. A compositionally biased stretch (polar residues) spans 232–256; the sequence is KTHSPTTPVRSCSLGTTSGTDTPMS. Over residues 285–294 the composition is skewed to basic residues; that stretch reads PSRKVARKQS. C2H2-type zinc fingers lie at residues 321–345 and 351–376; these read KGRF…PHVC and ERAF…GRNR. Residues 365–374 are compositionally biased toward basic residues; the sequence is TKTHSKRGGR. Residues 365-425 are disordered; that stretch reads TKTHSKRGGR…RETSEEAWLE (61 aa).

It is found in the nucleus. BrlA, abaA and wetA are pivotal regulators of conidiophore development and conidium maturation. They act individually and together to regulate their own expression and that of numerous other sporulation-specific genes. Binds promoters of target genes at brlA response elements (BREs) containing the conserved sequence 5'-(C/A)(A/G)AGGG(G/A)-3'. Also coordinates the expression of carbohydrate-active enzymes and of the key effectors of cell wall remodeling during autolysis. The protein is C2H2 type master regulator of conidiophore development brlA of Aspergillus niger (strain ATCC MYA-4892 / CBS 513.88 / FGSC A1513).